The following is a 434-amino-acid chain: Meiosis-specific kinetochore protein (434 aa).

Disordered regions lie at residues 1–102 (MDKI…PCET) and 249–289 (VFAE…PDNK). Basic and acidic residues predominate over residues 46-62 (KGKEQGLRKITEKKELS). Polar residues predominate over residues 64 to 76 (LTGSSSQRPSLLS). Positions 334–336 (STP) match the POLO box domain (PBD)-binding motif. Residues 391–394 (EICC) are required for localization to kinetochores. The segment at 404-424 (QMRRKDPAVKNRCSPPKDVPL) is disordered.

As to quaternary structure, interacts with CENPC. Interacts with PLK1; required for recruitment of PLK1 at kinetochores. As to expression, germ cell-specific. Expressed in both testis and ovary. Not expressed in other tissues.

The protein localises to the chromosome. It localises to the centromere. The protein resides in the kinetochore. In terms of biological role, key regulator of kinetochore function during meiosis I: required both for mono-orientation of kinetochores on sister chromosomes and protection of centromeric cohesin from separase-mediated cleavage. Acts by facilitating kinetochore mono-orientation during meiosis I, when kinetochores on sister chromosomes face the same direction and are thus captured and pulled by spindle fibers from the same pole. Also required to prevent cleavage of cohesin at centromeres during meiosis I, possibly by acting as a regulator of the shugoshin-dependent protection pathway. Acts in collaboration with PLK1: required for PLK1 enrichment to kinetochores. Not required during meiosis II or mitosis. The protein is Meiosis-specific kinetochore protein of Mus musculus (Mouse).